The following is a 597-amino-acid chain: MNNYFLRKENFFILFCFVFVSIFFVSNVTIIKCNNVENKIDNVGKKIENVGKKIGDMENKNDNVENKNDNVENKNDNVGNKNDNVKNASSDLYKYKLYGDIDEYAYYFLDIDIGKPSQRISLILDTGSSSLSFPCNGCKDCGIHMEKPYNLNYSKTSSILYCNKSNCPYGLKCVGNKCEYLQSYCEGSQIYGFYFSDIVTLPSYNNKKKISFEKLMGCHMHEESLFLHQQATGVLGFSLTKPNGVPTFVDLLFKHTPSLKPIYSICVSEHGGELIIGGYEPDYFLSNQKEKQKMDKSDNNSSNKGNVSIKLKNNDKNDDEENNSKDVIVSNNVEDIVWQAITRKYYYYIKIYGLDLYGTNIMDKKELDMLVDSGSTFTHIPENIYNQINYYLDILCIHDMTNIYEINKRLKLTNESLNKPLVYFEDFKTALKNIIQNENLCIKIVDGVQCWKSLENLPNLYITLSNNYKMIWKPSSYLYKKESFWCKGLEKQVNNKPILGLTFFKNKQVIFDLQQNQIAFIESKCPSNLTSSRPRTFNEYREKENIFLKVSYINLYCLWLLLALTILLSLILYVRKMFYMDYFPLSDQNKSPIQEST.

The Lumenal segment spans residues 1-551 (MNNYFLRKEN…EKENIFLKVS (551 aa)). The stretch at 33–88 (CNNVENKIDNVGKKIENVGKKIGDMENKNDNVENKNDNVENKNDNVGNKNDNVKNA) forms a coiled coil. Residues 58–75 (ENKNDNVENKNDNVENKN) show a composition bias toward basic and acidic residues. Residues 58–83 (ENKNDNVENKNDNVENKNDNVGNKND) form a disordered region. The region spanning 107-521 (YFLDIDIGKP…DLQQNQIAFI (415 aa)) is the Peptidase A1 domain. Asp125 is a catalytic residue. Cystine bridges form between Cys135/Cys218, Cys138/Cys141, Cys162/Cys173, Cys167/Cys178, Cys266/Cys525, Cys396/Cys441, and Cys450/Cys486. The span at 289–298 (KEKQKMDKSD) shows a compositional bias: basic and acidic residues. Residues 289–323 (KEKQKMDKSDNNSSNKGNVSIKLKNNDKNDDEENN) are disordered. A compositionally biased stretch (low complexity) spans 299-311 (NNSSNKGNVSIKL). The active site involves Asp372. A helical transmembrane segment spans residues 552 to 572 (YINLYCLWLLLALTILLSLIL). At 573–597 (YVRKMFYMDYFPLSDQNKSPIQEST) the chain is on the cytoplasmic side.

The protein belongs to the peptidase A1 family. As to quaternary structure, component of a complex composed of SPC25 and PMV; the interaction is mediated via the transmembrane domains. The complex interacts with the SEC61 channel-forming translocon complex and is involved in the recognition and import of PEXEL motif-containing proteins into the ER for subsequent export. It is not clear if the zymogen has a cleavable propeptide. In vitro, appears to be cleaved between Asn-87 and Ala-88. Cleavage of the putative propeptide is dispensable for catalytic activity.

It localises to the endoplasmic reticulum membrane. During the asexual blood stage, plays an essential role in the export of several proteins into the host erythrocytes by cleaving the pentameric localization motif RxLxE/Q/D (termed Plasmodium export element (PEXEL)) located downstream of the N-terminal secretory signal sequence. Specifically, cleaves after the leucine residue in the RxLxE/Q/D (or RxLxxE) motif of exported proteins including RESA, EMP2, EMP3, KAHRP, RIF/Rifin and STEVOR. Also, by regulating protein export, plays an essential role in gametocyte development and thus parasite transmission to the mosquito vector. The polypeptide is Plasmepsin V (Plasmodium falciparum (isolate HB3)).